The primary structure comprises 128 residues: NADH dehydrogenase [ubiquinone] 1 beta subcomplex subunit 6 (128 aa).

Residue serine 2 is modified to N-acetylserine. At lysine 24 the chain carries N6-acetyllysine. The chain crosses the membrane as a helical span at residues 64–86; the sequence is TYRHSIFAFTHVLIPVWIIHYYL.

This sequence belongs to the complex I NDUFB6 subunit family. As to quaternary structure, complex I is composed of 45 different subunits.

The protein localises to the mitochondrion inner membrane. Functionally, accessory subunit of the mitochondrial membrane respiratory chain NADH dehydrogenase (Complex I), that is believed not to be involved in catalysis. Complex I functions in the transfer of electrons from NADH to the respiratory chain. The immediate electron acceptor for the enzyme is believed to be ubiquinone. The protein is NADH dehydrogenase [ubiquinone] 1 beta subcomplex subunit 6 (NDUFB6) of Bos taurus (Bovine).